The primary structure comprises 262 residues: Polyamine aminopropyltransferase (262 aa).

Positions 1 to 249 (MWITQEITPY…DIHRAAFALP (249 aa)) constitute a PABS domain. S-methyl-5'-thioadenosine is bound at residue Asn-29. Asp-83 contacts spermidine. Residue Asp-155 is the Proton acceptor of the active site.

Belongs to the spermidine/spermine synthase family. In terms of assembly, homodimer or homotetramer.

The protein resides in the cytoplasm. It catalyses the reaction S-adenosyl 3-(methylsulfanyl)propylamine + putrescine = S-methyl-5'-thioadenosine + spermidine + H(+). Its pathway is amine and polyamine biosynthesis; spermidine biosynthesis; spermidine from putrescine: step 1/1. Functionally, catalyzes the irreversible transfer of a propylamine group from the amino donor S-adenosylmethioninamine (decarboxy-AdoMet) to putrescine (1,4-diaminobutane) to yield spermidine. The polypeptide is Polyamine aminopropyltransferase (Helicobacter pylori (strain HPAG1)).